We begin with the raw amino-acid sequence, 151 residues long: Large ribosomal subunit protein bL9 (151 aa).

Belongs to the bacterial ribosomal protein bL9 family.

Functionally, binds to the 23S rRNA. The protein is Large ribosomal subunit protein bL9 of Mycolicibacterium vanbaalenii (strain DSM 7251 / JCM 13017 / BCRC 16820 / KCTC 9966 / NRRL B-24157 / PYR-1) (Mycobacterium vanbaalenii).